The primary structure comprises 614 residues: UvrABC system protein C (614 aa).

The region spanning 12-91 (ESPGVYLMKG…IKKHRPRYNL (80 aa)) is the GIY-YIG domain. Residues 201–236 (RDLLKTYRERMASAAANERYEEAARYRDLIRAIEVT) enclose the UVR domain.

The protein belongs to the UvrC family. As to quaternary structure, interacts with UvrB in an incision complex.

It localises to the cytoplasm. Its function is as follows. The UvrABC repair system catalyzes the recognition and processing of DNA lesions. UvrC both incises the 5' and 3' sides of the lesion. The N-terminal half is responsible for the 3' incision and the C-terminal half is responsible for the 5' incision. This chain is UvrABC system protein C, found in Geobacter metallireducens (strain ATCC 53774 / DSM 7210 / GS-15).